The chain runs to 930 residues: Isoleucine--tRNA ligase (930 aa).

Positions 57 to 67 (PYANGNIHVGH) match the 'HIGH' region motif. L-isoleucyl-5'-AMP is bound at residue Glu-554. The 'KMSKS' region signature appears at 595 to 599 (KMSKS). Lys-598 is a binding site for ATP. The Zn(2+) site is built by Cys-888, Cys-891, Cys-908, and Cys-911.

Belongs to the class-I aminoacyl-tRNA synthetase family. IleS type 1 subfamily. In terms of assembly, monomer. Requires Zn(2+) as cofactor.

It is found in the cytoplasm. The catalysed reaction is tRNA(Ile) + L-isoleucine + ATP = L-isoleucyl-tRNA(Ile) + AMP + diphosphate. Functionally, catalyzes the attachment of isoleucine to tRNA(Ile). As IleRS can inadvertently accommodate and process structurally similar amino acids such as valine, to avoid such errors it has two additional distinct tRNA(Ile)-dependent editing activities. One activity is designated as 'pretransfer' editing and involves the hydrolysis of activated Val-AMP. The other activity is designated 'posttransfer' editing and involves deacylation of mischarged Val-tRNA(Ile). The protein is Isoleucine--tRNA ligase of Streptococcus pneumoniae (strain JJA).